Reading from the N-terminus, the 427-residue chain is Peptidase B (427 aa).

Residues lysine 195 and aspartate 200 each coordinate Mn(2+). Lysine 207 is an active-site residue. Mn(2+) is bound by residues aspartate 218, aspartate 277, and glutamate 279. Arginine 281 is a catalytic residue.

Belongs to the peptidase M17 family. In terms of assembly, homohexamer. It depends on Mn(2+) as a cofactor.

The protein localises to the cytoplasm. The catalysed reaction is Release of an N-terminal amino acid, Xaa, from a peptide or arylamide. Xaa is preferably Glu or Asp but may be other amino acids, including Leu, Met, His, Cys and Gln.. Functionally, probably plays an important role in intracellular peptide degradation. The chain is Peptidase B from Escherichia coli (strain SMS-3-5 / SECEC).